A 513-amino-acid polypeptide reads, in one-letter code: MKLAYWMYAGPAHIGTLRVASSFKNVHAIMHAPLGDDYFNVMRSMLERERDFTPVTASIVDRHVLARGSQEKVVDNIMRKDKEECPDLIVLTPTCTSSILQEDLQNFVDRASISVNSDVILADVNHYRVNELQAADRTLEQIVRYYLDKARRQGKLNQSITDVPSANIIGIFTLGFHNQHDCRELKRLLKDLGIKINQVIPEGGFVEDLEKLPKAWFNLIPYREVGLMTAIYLEKEFGMPYVSITPMGIADIVQCIRQIQKRVNTWTHFLLNQKLDYELYIDQQTRFISQAAWFSRSIDCQNLTGKKAVVFGDATHASSMTKILAQEMGIRVSCAGTYCKHDAEWFEEQVQGFCDEILITDDHTQVGDTIARIEPSAIFGTQMERHIGKRLDIPCGVISSPVHIQNFPLGYRPFLGYEGTNQIADLVYNSFTLGMEDHLLEIFGGHDTKEVITKSLSTDNDLTWNSESQLELNKIPGFVRGKIKRNTERFARQNGITGITVEVMYAAKEALNA.

Residue aspartate 36 participates in [4Fe-4S] cluster binding. The active-site Proton donor is the aspartate 299. Substrate is bound at residue 434-435; that stretch reads GM.

This sequence belongs to the ChlB/BchB/BchZ family. In terms of assembly, protochlorophyllide reductase is composed of three subunits; ChlL, ChlN and ChlB. Forms a heterotetramer of two ChlB and two ChlN subunits. [4Fe-4S] cluster serves as cofactor.

The protein resides in the plastid. It is found in the chloroplast. The enzyme catalyses chlorophyllide a + oxidized 2[4Fe-4S]-[ferredoxin] + 2 ADP + 2 phosphate = protochlorophyllide a + reduced 2[4Fe-4S]-[ferredoxin] + 2 ATP + 2 H2O. Its pathway is porphyrin-containing compound metabolism; chlorophyll biosynthesis (light-independent). Functionally, component of the dark-operative protochlorophyllide reductase (DPOR) that uses Mg-ATP and reduced ferredoxin to reduce ring D of protochlorophyllide (Pchlide) to form chlorophyllide a (Chlide). This reaction is light-independent. The NB-protein (ChlN-ChlB) is the catalytic component of the complex. This is Light-independent protochlorophyllide reductase subunit B from Anthoceros angustus (Hornwort).